The following is a 537-amino-acid chain: Apolipoprotein N-acyltransferase (537 aa).

6 helical membrane passes run Ile-10–Gly-30, Leu-37–Ile-57, Tyr-76–Val-96, Phe-107–Ala-127, Ile-181–Ile-201, and Ala-210–Ile-230. The 254-residue stretch at Met-248–Ala-501 folds into the CN hydrolase domain. Glu-295 acts as the Proton acceptor in catalysis. Lys-360 is a catalytic residue. Catalysis depends on Cys-413, which acts as the Nucleophile. The chain crosses the membrane as a helical span at residues Ile-507–Ala-527.

It belongs to the CN hydrolase family. Apolipoprotein N-acyltransferase subfamily.

The protein localises to the cell inner membrane. It carries out the reaction N-terminal S-1,2-diacyl-sn-glyceryl-L-cysteinyl-[lipoprotein] + a glycerophospholipid = N-acyl-S-1,2-diacyl-sn-glyceryl-L-cysteinyl-[lipoprotein] + a 2-acyl-sn-glycero-3-phospholipid + H(+). The protein operates within protein modification; lipoprotein biosynthesis (N-acyl transfer). Its function is as follows. Catalyzes the phospholipid dependent N-acylation of the N-terminal cysteine of apolipoprotein, the last step in lipoprotein maturation. The polypeptide is Apolipoprotein N-acyltransferase (Bradyrhizobium diazoefficiens (strain JCM 10833 / BCRC 13528 / IAM 13628 / NBRC 14792 / USDA 110)).